The chain runs to 108 residues: Transcription factor S (108 aa).

Zn(2+) contacts are provided by C5, C8, C21, C24, C69, C72, C97, and C100. A C4-type zinc finger spans residues 5–24; sequence CPKCNNLMLPKDGKLKCAVC. Residues 65–105 form a TFIIS-type zinc finger; sequence TRIECPKCGHNEAYWWLQQTRCADEPETRFYKCKKCGHTWR.

The protein belongs to the archaeal RpoM/eukaryotic RPA12/RPB9/RPC11 RNA polymerase family.

In terms of biological role, induces RNA cleavage activity in the RNA polymerase. In its presence, the cleavage activity of the RNA polymerase truncates the RNA back to position +15 in a stepwise manner by releasing mainly dinucleotides from the 3'-end of the nascent RNA. The truncated RNAs are able to continue elongation. Involved in transcriptional proofreading and fidelity. Misincorporation of nucleotides during elongation of transcription leads to arrested elongation complexes which are rescued by TFS-promoted removal of a dinucleotide from the 3'-end. TFS is able to induce a cleavage resynthesis cycle in stalled elongation complexes (resulting from the next missing nucleotide or a reduced incorporation rate of a wrong nucleotide) preventing misincorporation and enabling proofreading in a post-incorporation manner. Pausing of elongation complexes is the main determinant of TFS-induced RNA cleavage. This Methanocaldococcus jannaschii (strain ATCC 43067 / DSM 2661 / JAL-1 / JCM 10045 / NBRC 100440) (Methanococcus jannaschii) protein is Transcription factor S.